The chain runs to 52 residues: Large ribosomal subunit protein bL32c (52 aa).

This sequence belongs to the bacterial ribosomal protein bL32 family.

The protein resides in the plastid. The protein localises to the chloroplast. This Olimarabidopsis pumila (Dwarf rocket) protein is Large ribosomal subunit protein bL32c.